The following is a 511-amino-acid chain: Potassium voltage-gated channel subfamily A member 10 (511 aa).

The segment at 25–44 (EPGYATDFDPTSSKGRPGSS) is disordered. Residues 218–238 (VAVVSVLVVVISITIFCLETL) traverse the membrane as a helical segment. The chain crosses the membrane as a helical span at residues 271 to 292 (FFMVESTCIVWFTFELVLRFVV). C293 carries S-palmitoyl cysteine lipidation. The chain crosses the membrane as a helical span at residues 303–323 (IMNIIDIISIIPYFATLITEL). Residues 339 to 358 (ILRIIRLVRVFRIFKLSRHS) form a helical; Voltage-sensor membrane-spanning segment. The helical transmembrane segment at 375–395 (LGLLIFFLFIGVILFSSAVYF) threads the bilayer. Positions 421 to 426 (TVGYGD) match the Selectivity filter motif. A helical membrane pass occupies residues 436 to 456 (IVGTLCAIAGVLTIALPVPVI). Residues 489–511 (SRMGSTESLNKTNGSCSAEKSRK) are disordered.

Belongs to the potassium channel family. A (Shaker) (TC 1.A.1.2) subfamily. Kv1.8/KCNA10 sub-subfamily. Homotetramer. Interacts with KCN4B/POMP. Interaction with KCN4B/POMP is necessary for the modulation of channel activity by cAMP. Expressed strongly in the inner ear and weakly in skeletal muscle. Not detected in other tissues.

The protein resides in the membrane. It catalyses the reaction K(+)(in) = K(+)(out). Its activity is regulated as follows. The channel activity is up-regulated by cAMP. Functionally, voltage-gated potassium ion channel that mediates K(+) permeability of excitable membranes. When opened in response to the voltage difference across the membrane, KCNA10 channel selectively allows the flow of potassium ions across the membrane down their electrochemical gradient. The polypeptide is Potassium voltage-gated channel subfamily A member 10 (Mus musculus (Mouse)).